Here is a 256-residue protein sequence, read N- to C-terminus: Large ribosomal subunit protein bL28m (256 aa).

Residues 1–55 (MPLHKVPVGLWKRLRLREGIYSRLPAHYLRSLEEARTPTPVHFRPHGAKFKINPK) constitute a mitochondrion transit peptide.

It belongs to the bacterial ribosomal protein bL28 family. In terms of assembly, component of the mitochondrial ribosome large subunit (39S) which comprises a 16S rRNA and about 50 distinct proteins. Interacts with OXA1L.

Its subcellular location is the mitochondrion. This Bos taurus (Bovine) protein is Large ribosomal subunit protein bL28m (MRPL28).